We begin with the raw amino-acid sequence, 286 residues long: 2,3,4,5-tetrahydropyridine-2,6-dicarboxylate N-succinyltransferase (286 aa).

The substrate site is built by R109 and D146.

It belongs to the transferase hexapeptide repeat family. In terms of assembly, homotrimer.

The protein localises to the cytoplasm. The enzyme catalyses (S)-2,3,4,5-tetrahydrodipicolinate + succinyl-CoA + H2O = (S)-2-succinylamino-6-oxoheptanedioate + CoA. It participates in amino-acid biosynthesis; L-lysine biosynthesis via DAP pathway; LL-2,6-diaminopimelate from (S)-tetrahydrodipicolinate (succinylase route): step 1/3. This is 2,3,4,5-tetrahydropyridine-2,6-dicarboxylate N-succinyltransferase from Bartonella tribocorum (strain CIP 105476 / IBS 506).